The primary structure comprises 104 residues: ESAT-6-like protein (104 aa).

Residues 12–43 (MAQAAQDIEQSANAIRGMQNQLASAKDQLRSH) adopt a coiled-coil conformation.

The protein belongs to the WXG100 family. CFP-10 subfamily. In isolation forms a homodimer. Forms a tight 1:1 complex with EsxA. Forms a complex with EsxA and EccC, probably wholly mediated by EsxB; binds in a pocket in the third FtsK (ATPase) domain of EccC (residues 1163-1208).

It localises to the secreted. Its function is as follows. May help regulate assembly and function of the type VII secretion system (T7SS). Binds to EccC and induces its multimerization. May serve as a chaperone for EsxA. This Thermomonospora curvata (strain ATCC 19995 / DSM 43183 / JCM 3096 / KCTC 9072 / NBRC 15933 / NCIMB 10081 / Henssen B9) protein is ESAT-6-like protein.